The following is a 218-amino-acid chain: Glutathione S-transferase Mu 2 (218 aa).

The 87-residue stretch at 2-88 folds into the GST N-terminal domain; it reads PMTLGYWNIR…YIARKHNLCG (87 aa). 7-8 serves as a coordination point for glutathione; it reads YW. Phosphoserine occurs at positions 27 and 44. Residues 43 to 46, Lys50, 59 to 60, and 72 to 73 contribute to the glutathione site; these read RSQW, NL, and QS. The GST C-terminal domain maps to 90–208; it reads TEKEKIREDI…KSSRFLPRPV (119 aa). Residue Tyr116 participates in substrate binding.

The protein belongs to the GST superfamily. Mu family. Homodimer.

It localises to the cytoplasm. It carries out the reaction RX + glutathione = an S-substituted glutathione + a halide anion + H(+). It catalyses the reaction 11(S)-hydroxy-14(S),15(S)-epoxy-(5Z,8Z,12E)-eicosatrienoate + glutathione = (11S,15S)-dihydroxy-14(R)-S-glutathionyl-(5Z,8Z,12E)-eicosatrienoate. Functionally, conjugation of reduced glutathione to a wide number of exogenous and endogenous hydrophobic electrophiles. Participates in the formation of novel hepoxilin regioisomers. Has activity toward aflatoxin B(1)-8,9-epoxide (AFBO). This Macaca fascicularis (Crab-eating macaque) protein is Glutathione S-transferase Mu 2 (GSTM2).